Reading from the N-terminus, the 427-residue chain is Neuronal pentraxin-2 (427 aa).

Positions 1–17 (MLALLAAGVAFAVVVLA) are cleaved as a signal peptide. N-linked (GlcNAc...) asparagine glycosylation is found at Asn-144 and Asn-185. The Pentraxin (PTX) domain maps to 219–420 (DAFKVSLPFR…GASKWPVETC (202 aa)). Cys-249 and Cys-309 are disulfide-bonded. Asn-273, Glu-351, Gln-352, Asp-353, and Gln-363 together coordinate Ca(2+). Asn-389 carries an N-linked (GlcNAc...) asparagine glycan.

As to quaternary structure, homooligomer or heterooligomer (probably pentamer) with neuronal pentraxin receptor (NPTXR). It depends on Ca(2+) as a cofactor. As to expression, testis specific.

The protein localises to the cytoplasmic vesicle. It localises to the secretory vesicle. It is found in the acrosome lumen. Functionally, may be involved in binding, concentrating, and sorting soluble glycoproteins or glycolipids that are destined for the acrosome. The chain is Neuronal pentraxin-2 (NPTX2) from Cavia porcellus (Guinea pig).